A 608-amino-acid polypeptide reads, in one-letter code: UvrABC system protein C (608 aa).

The GIY-YIG domain maps to 16 to 94; that stretch reads NRPGVYRMFD…IKEWRPPYNI (79 aa). A UVR domain is found at 204–239; that stretch reads NALADELNTGMEQAAMRLDFEKAAELRDQVAILRRV.

It belongs to the UvrC family. Interacts with UvrB in an incision complex.

The protein localises to the cytoplasm. Its function is as follows. The UvrABC repair system catalyzes the recognition and processing of DNA lesions. UvrC both incises the 5' and 3' sides of the lesion. The N-terminal half is responsible for the 3' incision and the C-terminal half is responsible for the 5' incision. The sequence is that of UvrABC system protein C from Pseudomonas paraeruginosa (strain DSM 24068 / PA7) (Pseudomonas aeruginosa (strain PA7)).